The sequence spans 767 residues: Bifunctional lysine-specific demethylase and histidyl-hydroxylase NO66 (767 aa).

Residues 21-324 (TVSQKQQREK…GRQEAHRQNS (304 aa)) form a disordered region. S44 carries the post-translational modification Phosphoserine. Residues 46-71 (SDDDDEDDGEGEDDNDSNSDEDESGS) are compositionally biased toward acidic residues. The segment covering 72 to 81 (ESDATSADDS) has biased composition (low complexity). A compositionally biased stretch (acidic residues) spans 82-98 (FSSDDNDDDDSGDEDGS). Composition is skewed to polar residues over residues 127-137 (YTINSENSSVE) and 177-199 (ESATNGRIQQRKSMVEPATTSKP). S214 bears the Phosphoserine mark. The segment covering 262-279 (PSSSGASCPLPSKTSKQV) has biased composition (polar residues). The segment covering 315-324 (GRQEAHRQNS) has biased composition (basic and acidic residues). A JmjC domain is found at 420-565 (CSIRILNPST…NLLEKLMPMV (146 aa)). H466, D468, and H531 together coordinate Fe cation.

The protein belongs to the ROX family. NO66 subfamily. Requires Fe(2+) as cofactor.

The protein resides in the nucleus. The catalysed reaction is N(6),N(6)-dimethyl-L-lysyl(36)-[histone H3] + 2 2-oxoglutarate + 2 O2 = L-lysyl(36)-[histone H3] + 2 formaldehyde + 2 succinate + 2 CO2. Functionally, oxygenase that can act as both a histone lysine demethylase and a ribosomal histidine hydroxylase. Specifically demethylates 'Lys-4' (H3K4me) and 'Lys-36' (H3K36me) of histone H3, thereby playing a central role in histone code. This chain is Bifunctional lysine-specific demethylase and histidyl-hydroxylase NO66, found in Drosophila willistoni (Fruit fly).